Reading from the N-terminus, the 61-residue chain is MAKCFVTGKKKSFGNSRSHAMNANKRTWKVNLQKVRILVDGKPKRVWVSARALKSGKVQRV.

Belongs to the bacterial ribosomal protein bL28 family.

The protein is Large ribosomal subunit protein bL28 of Geobacillus sp. (strain WCH70).